The primary structure comprises 89 residues: Small ribosomal subunit protein uS14A (89 aa).

The protein belongs to the universal ribosomal protein uS14 family. In terms of assembly, part of the 30S ribosomal subunit. Contacts proteins S3 and S10.

Functionally, binds 16S rRNA, required for the assembly of 30S particles and may also be responsible for determining the conformation of the 16S rRNA at the A site. The polypeptide is Small ribosomal subunit protein uS14A (Staphylococcus epidermidis (strain ATCC 35984 / DSM 28319 / BCRC 17069 / CCUG 31568 / BM 3577 / RP62A)).